A 283-amino-acid chain; its full sequence is TIMELESS-interacting protein (283 aa).

A disordered region spans residues 1–68 (MAMIDPLENN…SSSAARKAVK (68 aa)). Over residues 15-24 (PDYENTEDET) the composition is skewed to acidic residues. The tract at residues 74-150 (LDANRLVSER…KEVQTCLKRI (77 aa)) is interaction with TIMELESS. 2 disordered regions span residues 186–205 (GNVG…EQQQ) and 217–238 (RRQA…PSYP).

It belongs to the CSM3 family. In terms of assembly, interacts with TIMELESS, which impairs TIMELESS self-association.

It is found in the cytoplasm. The protein resides in the nucleus. In terms of biological role, plays an important role in the control of DNA replication and the maintenance of replication fork stability. Important for cell survival after DNA damage or replication stress. May be required for the replication checkpoint induced by hydroxyurea or ultraviolet light. This chain is TIMELESS-interacting protein (TIPIN), found in Gallus gallus (Chicken).